We begin with the raw amino-acid sequence, 198 residues long: IMP cyclohydrolase (198 aa).

Belongs to the archaeal IMP cyclohydrolase family.

It catalyses the reaction IMP + H2O = 5-formamido-1-(5-phospho-D-ribosyl)imidazole-4-carboxamide. Its pathway is purine metabolism; IMP biosynthesis via de novo pathway; IMP from 5-formamido-1-(5-phospho-D-ribosyl)imidazole-4-carboxamide: step 1/1. Functionally, catalyzes the cyclization of 5-formylamidoimidazole-4-carboxamide ribonucleotide to IMP. The chain is IMP cyclohydrolase from Methanopyrus kandleri (strain AV19 / DSM 6324 / JCM 9639 / NBRC 100938).